The following is a 699-amino-acid chain: Polyribonucleotide nucleotidyltransferase (699 aa).

Positions 487 and 493 each coordinate Mg(2+). One can recognise a KH domain in the interval 554-613 (PRMLNMKINPEKIRDVIGKGGAVIRALQEETGTVIEIEDDGSITISSVSAEGAQKAKARI). In terms of domain architecture, S1 motif spans 623–691 (GKVYEGTVVR…ERGKIRLSMK (69 aa)).

The protein belongs to the polyribonucleotide nucleotidyltransferase family. It depends on Mg(2+) as a cofactor.

It localises to the cytoplasm. It catalyses the reaction RNA(n+1) + phosphate = RNA(n) + a ribonucleoside 5'-diphosphate. Functionally, involved in mRNA degradation. Catalyzes the phosphorolysis of single-stranded polyribonucleotides processively in the 3'- to 5'-direction. This chain is Polyribonucleotide nucleotidyltransferase, found in Azoarcus sp. (strain BH72).